The sequence spans 638 residues: NBPF family member NBPF4 (638 aa).

Coiled coils occupy residues 10–43 and 69–115; these read SERAEMNILEINQELRSQLAESNQQFRDLKEKFL and DSVL…KLRE. The interval 157-285 is disordered; the sequence is HLVHKLSPEN…VPPRHHDKSN (129 aa). Residues 165–179 are compositionally biased toward acidic residues; that stretch reads ENDEDEDEDEDDKDE. Residues 174–261 form the Olduvai 1 domain; that stretch reads EDDKDEEVEK…EEEEALNIPP (88 aa). Positions 192-202 are enriched in basic and acidic residues; sequence EVQKTEEKEVP. The span at 214–226 shows a compositional bias: low complexity; the sequence is SNSHNPSNSNQPH. Basic and acidic residues-rich tracts occupy residues 232 to 251 and 264 to 273; these read TFKEHEVDSALVVESEHPHD and QNDHEEEEGK. 2 consecutive Olduvai domains span residues 326 to 399 and 400 to 503; these read EKQS…ALVD and KIKK…SQAQ. The disordered stretch occupies residues 562–584; it reads GMKNPPQLEDDALEGSASNTQGR.

The protein belongs to the NBPF family. Expressed in testis.

Its subcellular location is the cytoplasm. The chain is NBPF family member NBPF4 from Homo sapiens (Human).